A 105-amino-acid chain; its full sequence is Serine protease inhibitor Kazal-type 8 (105 aa).

A signal peptide spans 1–21 (MKVIFSVAVLVLASSVWTSLA). 3 disulfide bridges follow: Cys-44/Cys-78, Cys-51/Cys-75, and Cys-64/Cys-96. Residues 44–98 (CIKNIQLCWILSYFKVSEPICGSNQVTYEGECHLCSGILYEDRTVIKVHDGPCEH) form the Kazal-like domain.

In terms of tissue distribution, expressed in epydiymis, in the cauda, corpus and caput.

Its subcellular location is the secreted. Functionally, probable serine protease inhibitor. The chain is Serine protease inhibitor Kazal-type 8 (Spink8) from Mus musculus (Mouse).